Here is a 195-residue protein sequence, read N- to C-terminus: Proline-rich protein 3 (195 aa).

The first 29 residues, 1–29 (MKMNFFNSFPQYGVYILGLNLLLCGVSEG), serve as a signal peptide directing secretion.

Component of the acid-insoluble organic matrix of calcified layers of the shell (at protein level).

It is found in the secreted. This chain is Proline-rich protein 3, found in Lottia gigantea (Giant owl limpet).